Reading from the N-terminus, the 118-residue chain is Large ribosomal subunit protein bL20 (118 aa).

The protein belongs to the bacterial ribosomal protein bL20 family.

In terms of biological role, binds directly to 23S ribosomal RNA and is necessary for the in vitro assembly process of the 50S ribosomal subunit. It is not involved in the protein synthesizing functions of that subunit. The polypeptide is Large ribosomal subunit protein bL20 (Francisella tularensis subsp. tularensis (strain FSC 198)).